We begin with the raw amino-acid sequence, 138 residues long: Large ribosomal subunit protein uL16 (138 aa).

Residues 1–19 (MLIPKRVKYRRQHRPHRSG) show a composition bias toward basic residues. Positions 1-24 (MLIPKRVKYRRQHRPHRSGVSKGG) are disordered.

It belongs to the universal ribosomal protein uL16 family. Part of the 50S ribosomal subunit.

Its function is as follows. Binds 23S rRNA and is also seen to make contacts with the A and possibly P site tRNAs. This Corynebacterium diphtheriae (strain ATCC 700971 / NCTC 13129 / Biotype gravis) protein is Large ribosomal subunit protein uL16.